We begin with the raw amino-acid sequence, 1012 residues long: Ubiquitin-activating enzyme E1 1 (1012 aa).

Arg-22 contributes to the ATP binding site. The residue at position 264 (Ser-264) is a Phosphoserine. 2 residues coordinate ATP: Ala-437 and Asp-463. 2 residues coordinate Mg(2+): Asp-465 and Glu-468. Residues Asn-471, Arg-474, Lys-487, Val-513, Asp-537, and Asn-538 each coordinate ATP. Residue Asp-537 coordinates Mg(2+). Lys-588 is covalently cross-linked (Glycyl lysine isopeptide (Lys-Gly) (interchain with G-Cter in ubiquitin)). Cys-593 acts as the Glycyl thioester intermediate in catalysis. Position 903 is a phosphoserine (Ser-903).

This sequence belongs to the ubiquitin-activating E1 family. Monomer. Interacts with the E2 ubiquitin-conjugating enzyme ubc4.

It localises to the cytoplasm. The protein localises to the nucleus. It catalyses the reaction ATP + ubiquitin + [E1 ubiquitin-activating enzyme]-L-cysteine = AMP + diphosphate + S-ubiquitinyl-[E1 ubiquitin-activating enzyme]-L-cysteine.. Its pathway is protein modification; protein ubiquitination. With respect to regulation, ubiquitin transfer between the E1 ubiquitin-activating enzyme ptr3 and E2 ubiquitin-conjugating enzyme ubc4 is enhanced by the presence of magnesium and ATP, or adenylated ubiquitin. E1 ubiquitin-activating enzyme that catalyzes the first step in ubiquitin conjugation to mark cellular proteins for degradation through the ubiquitin-proteasome system. Activates ubiquitin by first adenylating its C-terminal glycine residue with ATP, and thereafter linking this residue to the side chain of a cysteine residue in E1, yielding a ubiquitin-E1 thioester and free AMP. The polypeptide is Ubiquitin-activating enzyme E1 1 (ptr3) (Schizosaccharomyces pombe (strain 972 / ATCC 24843) (Fission yeast)).